A 279-amino-acid chain; its full sequence is MKLLLLLCISCIPLAYSHDGEPFDYLMFTTIYPTAVCRADDDSVPESCEIPSGTPQWSIHGLWPNFENGSYPQNCRGTPRHFDENLIKSIEDRLVVVWPNLYPKKTIQSFWKHEYDKHGTCAQSEKLFESELAYFTEVMKVFDSIDVAGGLKSVGPSEKPITSSDLKNALSGVTSGKTFQFHCLRDKKTKQFLLGDIRLCLNKDLTIRDCPTDGKHPNRVSRFERSIGRNRRGPPLPSFQPCPAEFIYLPEMSSISKSSDSTSPSIFGRIWSAIKNIGN.

The signal sequence occupies residues 1-17 (MKLLLLLCISCIPLAYS). A disulfide bond links Cys-37 and Cys-48. The active site involves His-60. N-linked (GlcNAc...) asparagine glycosylation occurs at Asn-68. Residues Glu-114 and His-118 contribute to the active site. An intrachain disulfide couples Cys-200 to Cys-210.

The protein belongs to the RNase T2 family. Expressed in the pharynx, hypodermis, muscle cells, sheath cells, intestinal cells, the vulva and tail regions.

It localises to the lysosome. The catalysed reaction is a ribonucleotidyl-ribonucleotide-RNA + H2O = a 3'-end 3'-phospho-ribonucleotide-RNA + a 5'-end dephospho-ribonucleoside-RNA + H(+). Probable endoribonuclease involved in the autophagy-mediated degradation of ribosomal RNA and ribosomal proteins in lysosomes. This chain is Ribonuclease T2 protein rnst-2, found in Caenorhabditis elegans.